The sequence spans 257 residues: uncharacterized protein (257 aa).

NAD(+)-binding residues include Asp34, Asp60, Val61, Asn87, Tyr152, and Lys156. Tyr152 acts as the Proton acceptor in catalysis.

It belongs to the short-chain dehydrogenases/reductases (SDR) family.

This is an uncharacterized protein from Bacillus subtilis (strain 168).